We begin with the raw amino-acid sequence, 290 residues long: MNVIRARTAGFCMGVSLALRKLDREVDRAEEKAAQGSPRCRIATFGPIIHNPQVLEAYAGMGVRCLRQVDEVEAGDHVVIRAHGVPQQQEKALRSRDAVVVDATCPKVKKAQLGIEEQCRAGRTLLLFGEAEHPEVRGLLSYAGEGALVFGSVDELEGLPLQPETEYFLAAQTTQDRVAFEVARAWLHERLGHEVPVLETICDATRLRQQEAIDIARKVDAMVVVGGFDSGNTRRLADVAAAQGVFTVHVENESQLPVEQLRGCGIIGLTAGASTPKSIIDATQRFLESL.

[4Fe-4S] cluster is bound at residue cysteine 12. Residues histidine 50 and histidine 83 each coordinate (2E)-4-hydroxy-3-methylbut-2-enyl diphosphate. 2 residues coordinate dimethylallyl diphosphate: histidine 50 and histidine 83. Isopentenyl diphosphate is bound by residues histidine 50 and histidine 83. Residue cysteine 105 coordinates [4Fe-4S] cluster. Residue histidine 133 participates in (2E)-4-hydroxy-3-methylbut-2-enyl diphosphate binding. Histidine 133 provides a ligand contact to dimethylallyl diphosphate. Histidine 133 is an isopentenyl diphosphate binding site. The active-site Proton donor is the glutamate 135. Residue threonine 173 coordinates (2E)-4-hydroxy-3-methylbut-2-enyl diphosphate. Cysteine 202 serves as a coordination point for [4Fe-4S] cluster. Positions 230, 232, and 274 each coordinate (2E)-4-hydroxy-3-methylbut-2-enyl diphosphate. Residues serine 230, asparagine 232, and serine 274 each contribute to the dimethylallyl diphosphate site. Residues serine 230, asparagine 232, and serine 274 each coordinate isopentenyl diphosphate.

The protein belongs to the IspH family. [4Fe-4S] cluster is required as a cofactor.

It carries out the reaction isopentenyl diphosphate + 2 oxidized [2Fe-2S]-[ferredoxin] + H2O = (2E)-4-hydroxy-3-methylbut-2-enyl diphosphate + 2 reduced [2Fe-2S]-[ferredoxin] + 2 H(+). The enzyme catalyses dimethylallyl diphosphate + 2 oxidized [2Fe-2S]-[ferredoxin] + H2O = (2E)-4-hydroxy-3-methylbut-2-enyl diphosphate + 2 reduced [2Fe-2S]-[ferredoxin] + 2 H(+). It functions in the pathway isoprenoid biosynthesis; dimethylallyl diphosphate biosynthesis; dimethylallyl diphosphate from (2E)-4-hydroxy-3-methylbutenyl diphosphate: step 1/1. It participates in isoprenoid biosynthesis; isopentenyl diphosphate biosynthesis via DXP pathway; isopentenyl diphosphate from 1-deoxy-D-xylulose 5-phosphate: step 6/6. Catalyzes the conversion of 1-hydroxy-2-methyl-2-(E)-butenyl 4-diphosphate (HMBPP) into a mixture of isopentenyl diphosphate (IPP) and dimethylallyl diphosphate (DMAPP). Acts in the terminal step of the DOXP/MEP pathway for isoprenoid precursor biosynthesis. This Nitratidesulfovibrio vulgaris (strain ATCC 29579 / DSM 644 / CCUG 34227 / NCIMB 8303 / VKM B-1760 / Hildenborough) (Desulfovibrio vulgaris) protein is 4-hydroxy-3-methylbut-2-enyl diphosphate reductase.